The chain runs to 347 residues: Protein RecA (347 aa).

65–72 provides a ligand contact to ATP; that stretch reads GPESSGKT. The disordered stretch occupies residues 328 to 347; it reads SPAQPEAPAAGEKPEQEEEF.

This sequence belongs to the RecA family.

It is found in the cytoplasm. Its function is as follows. Can catalyze the hydrolysis of ATP in the presence of single-stranded DNA, the ATP-dependent uptake of single-stranded DNA by duplex DNA, and the ATP-dependent hybridization of homologous single-stranded DNAs. It interacts with LexA causing its activation and leading to its autocatalytic cleavage. The sequence is that of Protein RecA from Vibrio parahaemolyticus serotype O3:K6 (strain RIMD 2210633).